A 520-amino-acid polypeptide reads, in one-letter code: Amine oxidase [flavin-containing] B (520 aa).

Residue Ser2 is modified to N-acetylserine. The Cytoplasmic portion of the chain corresponds to 2 to 489 (SSKCDVVVVG…TFLQRHLPSV (488 aa)). N6-acetyllysine is present on Lys52. Residue Cys397 is modified to S-8alpha-FAD cysteine. Residues 490-516 (PGLLKLIGLTTIFSATALGFLAHKRGL) traverse the membrane as a helical; Anchor for type IV membrane protein segment. Residues 517–520 (LVRI) are Mitochondrial intermembrane-facing.

In terms of assembly, monomer, homo- or heterodimer (containing two subunits of similar size). Each subunit contains a covalently bound flavin. Enzymatically active as monomer. It depends on FAD as a cofactor.

The protein localises to the mitochondrion outer membrane. It catalyses the reaction a secondary aliphatic amine + O2 + H2O = a primary amine + an aldehyde + H2O2. The enzyme catalyses a primary methyl amine + O2 + H2O = an aldehyde + H2O2 + NH4(+). It carries out the reaction benzylamine + O2 + H2O = benzaldehyde + H2O2 + NH4(+). The catalysed reaction is (R)-adrenaline + O2 + H2O = (R)-3,4-dihydroxymandelaldehyde + methylamine + H2O2. It catalyses the reaction dopamine + O2 + H2O = 3,4-dihydroxyphenylacetaldehyde + H2O2 + NH4(+). The enzyme catalyses tyramine + O2 + H2O = (4-hydroxyphenyl)acetaldehyde + H2O2 + NH4(+). It carries out the reaction (R)-noradrenaline + O2 + H2O = (R)-3,4-dihydroxymandelaldehyde + H2O2 + NH4(+). The catalysed reaction is 2-phenylethylamine + O2 + H2O = 2-phenylacetaldehyde + H2O2 + NH4(+). It catalyses the reaction N-acetylputrescine + O2 + H2O = 4-acetamidobutanal + H2O2 + NH4(+). Its function is as follows. Catalyzes the oxidative deamination of primary and some secondary amines such as neurotransmitters, and exogenous amines including the tertiary amine, neurotoxin 1-methyl-4-phenyl-1,2,3,6-tetrahydropyridine (MPTP), with concomitant reduction of oxygen to hydrogen peroxide and participates in the metabolism of neuroactive and vasoactive amines in the central nervous system and peripheral tissues. Preferentially degrades benzylamine and phenylethylamine. In Bos taurus (Bovine), this protein is Amine oxidase [flavin-containing] B.